Consider the following 374-residue polypeptide: Probable ethanolamine kinase (374 aa).

The ATP site is built by Arg93 and Asp252.

The protein belongs to the choline/ethanolamine kinase family.

It carries out the reaction ethanolamine + ATP = phosphoethanolamine + ADP + H(+). It participates in phospholipid metabolism; phosphatidylethanolamine biosynthesis; phosphatidylethanolamine from ethanolamine: step 1/3. Its function is as follows. Involved in phospholipid biosynthesis. Catalyzes the first step in phosphatidylethanolamine biosynthesis. This chain is Probable ethanolamine kinase (EMB1187), found in Arabidopsis thaliana (Mouse-ear cress).